Here is a 354-residue protein sequence, read N- to C-terminus: Uroporphyrinogen decarboxylase (354 aa).

Residues 30-34 (RQAGR), Phe-49, Asp-79, Tyr-156, Ser-211, and His-326 each bind substrate.

Belongs to the uroporphyrinogen decarboxylase family. In terms of assembly, homodimer.

It is found in the cytoplasm. The enzyme catalyses uroporphyrinogen III + 4 H(+) = coproporphyrinogen III + 4 CO2. It participates in porphyrin-containing compound metabolism; protoporphyrin-IX biosynthesis; coproporphyrinogen-III from 5-aminolevulinate: step 4/4. Catalyzes the decarboxylation of four acetate groups of uroporphyrinogen-III to yield coproporphyrinogen-III. The chain is Uroporphyrinogen decarboxylase from Salinibacter ruber (strain DSM 13855 / M31).